A 380-amino-acid polypeptide reads, in one-letter code: Queuine tRNA-ribosyltransferase (380 aa).

Asp-96 (proton acceptor) is an active-site residue. Substrate-binding positions include 96 to 100 (DSGGF), Asp-150, Gln-193, and Gly-220. The RNA binding stretch occupies residues 251–257 (GVGAPDS). Asp-270 serves as the catalytic Nucleophile. The segment at 275–279 (TRIAR) is RNA binding; important for wobble base 34 recognition. Zn(2+)-binding residues include Cys-308, Cys-310, Cys-313, and His-339.

The protein belongs to the queuine tRNA-ribosyltransferase family. As to quaternary structure, homodimer. Within each dimer, one monomer is responsible for RNA recognition and catalysis, while the other monomer binds to the replacement base PreQ1. Requires Zn(2+) as cofactor.

The catalysed reaction is 7-aminomethyl-7-carbaguanine + guanosine(34) in tRNA = 7-aminomethyl-7-carbaguanosine(34) in tRNA + guanine. The protein operates within tRNA modification; tRNA-queuosine biosynthesis. In terms of biological role, catalyzes the base-exchange of a guanine (G) residue with the queuine precursor 7-aminomethyl-7-deazaguanine (PreQ1) at position 34 (anticodon wobble position) in tRNAs with GU(N) anticodons (tRNA-Asp, -Asn, -His and -Tyr). Catalysis occurs through a double-displacement mechanism. The nucleophile active site attacks the C1' of nucleotide 34 to detach the guanine base from the RNA, forming a covalent enzyme-RNA intermediate. The proton acceptor active site deprotonates the incoming PreQ1, allowing a nucleophilic attack on the C1' of the ribose to form the product. After dissociation, two additional enzymatic reactions on the tRNA convert PreQ1 to queuine (Q), resulting in the hypermodified nucleoside queuosine (7-(((4,5-cis-dihydroxy-2-cyclopenten-1-yl)amino)methyl)-7-deazaguanosine). This chain is Queuine tRNA-ribosyltransferase, found in Streptococcus thermophilus (strain CNRZ 1066).